Reading from the N-terminus, the 398-residue chain is Phosphoglycerate kinase (398 aa).

Substrate is bound by residues 23 to 25 (DFN), arginine 38, 61 to 64 (HMGK), arginine 122, and arginine 155. ATP-binding positions include lysine 206, glycine 297, glutamate 328, and 354-357 (GGDS).

Belongs to the phosphoglycerate kinase family. In terms of assembly, monomer.

The protein localises to the cytoplasm. The catalysed reaction is (2R)-3-phosphoglycerate + ATP = (2R)-3-phospho-glyceroyl phosphate + ADP. Its pathway is carbohydrate degradation; glycolysis; pyruvate from D-glyceraldehyde 3-phosphate: step 2/5. In Clostridium botulinum (strain Kyoto / Type A2), this protein is Phosphoglycerate kinase.